The sequence spans 196 residues: Probable phosphoheptose isomerase (196 aa).

Residues 43-196 (IVNVFNSGGK…MICSVIDSYY (154 aa)) form the SIS domain. Position 58-60 (58-60 (NGG)) interacts with substrate. Residues His67 and Glu71 each contribute to the Zn(2+) site. Substrate is bound by residues Glu71, 100-101 (ND), 126-128 (STS), Ser131, and Gln178. 2 residues coordinate Zn(2+): Gln178 and His186.

Belongs to the SIS family. GmhA subfamily. Zn(2+) is required as a cofactor.

The protein localises to the cytoplasm. It catalyses the reaction 2 D-sedoheptulose 7-phosphate = D-glycero-alpha-D-manno-heptose 7-phosphate + D-glycero-beta-D-manno-heptose 7-phosphate. The protein operates within carbohydrate biosynthesis; D-glycero-D-manno-heptose 7-phosphate biosynthesis; D-glycero-alpha-D-manno-heptose 7-phosphate and D-glycero-beta-D-manno-heptose 7-phosphate from sedoheptulose 7-phosphate: step 1/1. Functionally, catalyzes the isomerization of sedoheptulose 7-phosphate in D-glycero-D-manno-heptose 7-phosphate. This is Probable phosphoheptose isomerase from Thermoplasma volcanium (strain ATCC 51530 / DSM 4299 / JCM 9571 / NBRC 15438 / GSS1).